Consider the following 417-residue polypeptide: Phosphoglycerate kinase 1 (417 aa).

The residue at position 2 (Ser2) is an N-acetylserine. Residues Ser2 and Ser4 each carry the phosphoserine modification. The residue at position 6 (Lys6) is an N6-succinyllysine. The residue at position 11 (Lys11) is an N6-acetyllysine. Val23, Asp24, Phe25, Asn26, Gln38, and Arg39 together coordinate (2R)-3-phosphoglycerate. The tract at residues 38-43 (QRIKAA) is mitochondrial targeting region exposed following cis-trans isomerization by PIN1 and recognized by the TOM complex for mitochondrial translocation of the protein. Position 48 is an N6-acetyllysine; alternate (Lys48). Residue Lys48 is modified to N6-succinyllysine; alternate. Residues Ser62, His63, Gly65, and Arg66 each contribute to the (2R)-3-phosphoglycerate site. Position 75 is an N6-acetyllysine (Lys75). Residue Tyr76 is modified to Phosphotyrosine. Lys86 and Lys91 each carry N6-acetyllysine. Lys97 is subject to N6-acetyllysine; alternate. Lys97 carries the N6-(2-hydroxyisobutyryl)lysine; alternate modification. 2 residues coordinate (2R)-3-phosphoglycerate: Leu122 and Arg123. Lys131 is modified (N6-acetyllysine; alternate). Position 131 is an N6-malonyllysine; alternate (Lys131). Lys146 bears the N6-acetyllysine mark. Positions 170 and 171 each coordinate (2R)-3-phosphoglycerate. Lys191 is subject to N6-succinyllysine. Position 196 is a phosphotyrosine (Tyr196). Lys199 bears the N6-acetyllysine mark. At Ser203 the chain carries Phosphoserine. Gly214 contributes to the ADP binding site. Gly214 serves as a coordination point for CDP. Ala215 and Lys216 together coordinate AMP. Ala215 lines the ATP pocket. Mg(2+) is bound at residue Ala215. Lys216 carries the post-translational modification N6-(2-hydroxyisobutyryl)lysine. 2 residues coordinate Mg(2+): Ala218 and Asp219. Position 219 (Asp219) interacts with CDP. Lys220 is an AMP binding site. Lys220 is an ATP binding site. N6-(2-hydroxyisobutyryl)lysine is present on Lys220. Residue Gly238 participates in ADP binding. Gly238 is a binding site for CDP. Gly239 contacts AMP. Gly239 is an ATP binding site. Residues Lys267 and Lys291 each carry the N6-acetyllysine modification. An AMP-binding site is contributed by Gly313. Gly313 provides a ligand contact to ATP. Position 323 is an N6-(2-hydroxyisobutyryl)lysine (Lys323). Gly338, Val340, and Phe343 together coordinate CDP. Phe343 is a binding site for ADP. AMP is bound at residue Glu344. Glu344 serves as a coordination point for ATP. Lys361 bears the N6-acetyllysine mark. 2 residues coordinate ATP: Asp375 and Thr376. Asp375 is a binding site for Mg(2+).

Belongs to the phosphoglycerate kinase family. Monomer. Interacts with kinase MAPK1/ERK2; the interaction is direct, occurs under hypoxic conditions, and promotes its interaction with PIN1. Interacts with peptidyl-prolyl cis-trans isomerase PIN1; the interaction is direct, occurs under hypoxic conditions, and targets the protein to the mitochondrion by promoting interactions with the TOM complex. Interacts with mitochondrial circRNA mcPGK1 (via its 2nd stem-loop); the interaction is direct and targets the protein to the mitochondrion by promoting interactions with the TOM complex. Interacts with pyruvate dehydrogenase kinase PDK1; the interaction is direct, occurs under hypoxic conditions and leads to PDK1-mediated inhibition of pyruvate dehydrogenase complex activity. It depends on Mg(2+) as a cofactor. In terms of processing, phosphorylated at Ser-203 by MAPK1/ERK2 under hypoxic conditions, which promotes its mitochondrial targeting. In terms of tissue distribution, testis, lung, brain, skeletal muscle, liver, intestine, and kidney (at protein level).

It localises to the cytoplasm. Its subcellular location is the cytosol. The protein resides in the mitochondrion matrix. It carries out the reaction (2R)-3-phosphoglycerate + ATP = (2R)-3-phospho-glyceroyl phosphate + ADP. The catalysed reaction is L-seryl-[protein] + ATP = O-phospho-L-seryl-[protein] + ADP + H(+). Its pathway is carbohydrate degradation; glycolysis; pyruvate from D-glyceraldehyde 3-phosphate: step 2/5. Functionally, catalyzes one of the two ATP producing reactions in the glycolytic pathway via the reversible conversion of 1,3-diphosphoglycerate to 3-phosphoglycerate. Both L- and D- forms of purine and pyrimidine nucleotides can be used as substrates, but the activity is much lower on pyrimidines. In addition to its role as a glycolytic enzyme, it seems that PGK-1 acts as a polymerase alpha cofactor protein (primer recognition protein). Acts as a protein kinase when localized to the mitochondrion where it phosphorylates pyruvate dehydrogenase kinase PDK1 to inhibit pyruvate dehydrogenase complex activity and suppress the formation of acetyl-coenzyme A from pyruvate, and consequently inhibit oxidative phosphorylation and promote glycolysis. May play a role in sperm motility. The polypeptide is Phosphoglycerate kinase 1 (Pgk1) (Mus musculus (Mouse)).